A 200-amino-acid polypeptide reads, in one-letter code: Inner membrane-spanning protein YciB (200 aa).

Transmembrane regions (helical) follow at residues 32 to 52 (FVAT…SYVV), 56 to 76 (VPLM…LTLV), 93 to 113 (LFAV…AILF), 126 to 146 (FLTI…EVIW), and 153 to 173 (FWVA…AMTQ).

Belongs to the YciB family.

It is found in the cell inner membrane. Functionally, plays a role in cell envelope biogenesis, maintenance of cell envelope integrity and membrane homeostasis. In Afipia carboxidovorans (strain ATCC 49405 / DSM 1227 / KCTC 32145 / OM5) (Oligotropha carboxidovorans), this protein is Inner membrane-spanning protein YciB.